The following is a 78-amino-acid chain: uncharacterized protein (78 aa).

Residues 21-43 (SPFLFGAPLVGGLLGGFLGSALF) traverse the membrane as a helical segment.

The protein localises to the membrane. This is an uncharacterized protein from Bacillus subtilis (strain 168).